A 401-amino-acid chain; its full sequence is Protein nanos (401 aa).

The disordered stretch occupies residues 181–207; the sequence is LGRMSYGSAPPQVQMPPQQQHQQQQGL. The segment covering 190-205 has biased composition (low complexity); sequence PPQVQMPPQQQHQQQQ. A Nanos-type zinc finger spans residues 318–372; sequence HCVFCENNNEPEAVINSHSVRDNFNRVLCPKLRTYVCPICGASGDSAHTIKYCPK. Zn(2+) is bound by residues C319, C322, H335, C346, C354, C357, H365, and C370. Short sequence motifs (C2HC) lie at residues 319–346 and 354–370; these read CVFCENNNEPEAVINSHSVRDNFNRVLC and CPICGASGDSAHTIKYC.

The protein belongs to the nanos family. In terms of assembly, interacts with pum and brat. Interacts with cup. Interacts with mei-P26; possibly involved in regulation of brat levels. Interacts with wh; may be involved in mei-P26-dependent derepression of the BMP signaling pathway. Acts via the formation of a quaternary complex composed of pum, nanos, brat and the 3'-UTR mRNA of hb. Binds RNA with no specificity. As to expression, posterior part of the embryo. While the transcript is present throughout the embryo, nanos translation is controlled by smg, and the protein is found in pole plasm and pole cells. In the female ovary expressed in germline stem cells, precystoblasts and in maturing cystoblasts; in early cystoblasts expression is post-transcriptionally repressed by bam in a 3'UTR-dependent manner.

The protein localises to the cytoplasm. It localises to the cytoplasmic ribonucleoprotein granule. Its function is as follows. Maternal RNA-binding protein that is required for germ cells proliferation and self-renewal. Acts by forming a complex with pum and brat that regulates translation and mRNA stability. The complex binds to the Nanos Response Element (NRE), a 16 bp sequence in the hb mRNA 3'-UTR and prevents its translation. Controls posterior development. Rescuing factor for the abdominal defect of posterior group mutants. The other posterior group genes are not required for nanos function but rather play a role in localization or distribution of nanos protein. In Drosophila melanogaster (Fruit fly), this protein is Protein nanos.